The sequence spans 65 residues: Small ribosomal subunit protein eS27 (65 aa).

Cys20, Cys23, Cys39, and Cys42 together coordinate Zn(2+). A C4-type zinc finger spans residues 20 to 42 (CIDCGNEQIVFSNPATTVRCLVC).

This sequence belongs to the eukaryotic ribosomal protein eS27 family. In terms of assembly, part of the 30S ribosomal subunit. Requires Zn(2+) as cofactor.

This chain is Small ribosomal subunit protein eS27, found in Thermococcus onnurineus (strain NA1).